A 291-amino-acid chain; its full sequence is Inhibitory synaptic factor 1 (291 aa).

Residues 1-25 are disordered; it reads MNIRGAPDLGQPSDDPNSGGERERI. Positions 30–63 form a coiled coil; the sequence is KMVIGQLEGILRELKEVAKELREVVSQIDKLTSD. 2 disordered regions span residues 120–186 and 201–291; these read TPSD…ERVR and EEGD…KGKN. Residues 201 to 213 show a composition bias toward acidic residues; sequence EEGDGEEVEEEEA. Polar residues predominate over residues 262-284; sequence RNSSTQTVSDKSTQTVLPYTATK.

This sequence belongs to the INSYN1 family. As to quaternary structure, interacts with GPHN.

The protein localises to the postsynaptic density. In terms of biological role, component of the protein machinery at the inhibitory synapses, probably acting as a scaffold. Inhibitory synapses dampen neuronal activity through postsynaptic hyperpolarization. This synaptic inhibition is fundamental for the functioning of the central nervous system, shaping and orchestrating the flow of information through neuronal networks to generate a precise neural code. The protein is Inhibitory synaptic factor 1 (Insyn1) of Rattus norvegicus (Rat).